The primary structure comprises 150 residues: Transcriptional repressor NrdR (150 aa).

Residues 3–34 (CPFCNASDTKVVDTRASEDDKIVRRRRECISC) fold into a zinc finger. Residues 49–139 (LTVVKKDKNR…VYREFTDVKS (91 aa)) form the ATP-cone domain.

Belongs to the NrdR family. The cofactor is Zn(2+).

In terms of biological role, negatively regulates transcription of bacterial ribonucleotide reductase nrd genes and operons by binding to NrdR-boxes. The chain is Transcriptional repressor NrdR from Finegoldia magna (strain ATCC 29328 / DSM 20472 / WAL 2508) (Peptostreptococcus magnus).